Here is a 258-residue protein sequence, read N- to C-terminus: Ribosomal RNA large subunit methyltransferase E (258 aa).

S-adenosyl-L-methionine-binding residues include Gly58, Trp60, Asp78, Asp96, and Asp120. The active-site Proton acceptor is Lys160.

This sequence belongs to the class I-like SAM-binding methyltransferase superfamily. RNA methyltransferase RlmE family.

The protein resides in the cytoplasm. It catalyses the reaction uridine(2552) in 23S rRNA + S-adenosyl-L-methionine = 2'-O-methyluridine(2552) in 23S rRNA + S-adenosyl-L-homocysteine + H(+). In terms of biological role, specifically methylates the uridine in position 2552 of 23S rRNA at the 2'-O position of the ribose in the fully assembled 50S ribosomal subunit. The polypeptide is Ribosomal RNA large subunit methyltransferase E (Methanococcus maripaludis (strain C5 / ATCC BAA-1333)).